Consider the following 330-residue polypeptide: Protein qutG (330 aa).

Mg(2+)-binding residues include E78, D100, L102, D103, and D251. Substrate is bound at residue E78. Residues 102 to 105 (LDGT) and D251 each bind substrate.

The protein belongs to the inositol monophosphatase superfamily.

Not known. Probably involved in quinate metabolism. The sequence is that of Protein qutG (qutG) from Emericella nidulans (strain FGSC A4 / ATCC 38163 / CBS 112.46 / NRRL 194 / M139) (Aspergillus nidulans).